The chain runs to 129 residues: Small ribosomal subunit protein uS8 (129 aa).

Belongs to the universal ribosomal protein uS8 family. In terms of assembly, part of the 30S ribosomal subunit.

One of the primary rRNA binding proteins, it binds directly to 16S rRNA central domain where it helps coordinate assembly of the platform of the 30S subunit. The polypeptide is Small ribosomal subunit protein uS8 (Picrophilus torridus (strain ATCC 700027 / DSM 9790 / JCM 10055 / NBRC 100828 / KAW 2/3)).